Reading from the N-terminus, the 707-residue chain is MESKPSRIPRGISVQPSSSLSARMMSGSRGSSLNDTYHSRDSSFRLDSEYQSTSASASASPFQSAWYSESEITQGARSRSQNQQRDHDSKRPKLSCTNCTTSAGRNVGNGLNTLSDSSWRHSQVPRSSSMVLGSFGTDLMRERRDLERRTDSSISNLMDYSHRSGDFTTSSYVQDRVPSYSQGARPKENSMSTLQLNTSSTNHQLPSEHQTILSSRDSRSSLRSNFSSRESESSRSNTQPGFSYSSSRDEAPIISNSERVVSSQRPFQESSDNEGRRTTRRLLSRIASSMSSTFFSRRSSQDSLNTRSLSSENSYVSPRILTASQSRSNVPSTSEVPDNRASEASQGFRFLRRRWGLSSLSHNHSSESDSENFNQESESRNTGPWLSSSLRNRCTPLFSRRRREGRDESSRIPTSDTSSRSHIFRRESNEVVHLEAQNDPLGAAANRPQASAASSSATTGGSTSDSAQGGRNTGIAGILPGSLFRFAVPPALGSNLTDNVMITVDIIPSGWNSADGKSDKTKSAPSRDPERLQKIKESLLLEDSEEEEGDLCRICQMAAASSSNLLIEPCKCTGSLQYVHQDCMKKWLQAKINSGSSLEAVTTCELCKEKLELNLEDFDIHELHRAHANEQAEYEFISSGLYLVVLLHLCEQSFSDMMGNTNEPSTRVRFINLARTLQAHMEDLETSEDDSEEDGDHNRTFDIAYFI.

Met-1 carries the N-acetylmethionine modification. 5 disordered regions span residues 1-126, 157-279, 294-343, 361-425, and 444-473; these read MESK…QVPR, LMDY…RRTT, FFSR…RASE, SHNH…HIFR, and AANRPQASAASSSATTGGSTSDSAQGGRNT. A compositionally biased stretch (low complexity) spans 17-33; sequence SSSLSARMMSGSRGSSL. A compositionally biased stretch (basic and acidic residues) spans 37-48; the sequence is YHSRDSSFRLDS. Residues 52-65 show a composition bias toward low complexity; that stretch reads STSASASASPFQSA. 4 stretches are compositionally biased toward polar residues: residues 66-83, 95-126, 189-212, and 254-270; these read WYSESEITQGARSRSQNQ, SCTNCTTSAGRNVGNGLNTLSDSSWRHSQVPR, NSMSTLQLNTSSTNHQLPSEHQTI, and ISNSERVVSSQRPFQES. A compositionally biased stretch (low complexity) spans 294-303; that stretch reads FFSRRSSQDS. Composition is skewed to polar residues over residues 304–336, 373–392, and 412–421; these read LNTRSLSSENSYVSPRILTASQSRSNVPSTSEV, FNQESESRNTGPWLSSSLRN, and IPTSDTSSRS. Ser-317 and Ser-389 each carry phosphoserine. The span at 444-470 shows a compositional bias: low complexity; the sequence is AANRPQASAASSSATTGGSTSDSAQGG. The segment at 544–614 adopts an RING-CH-type zinc-finger fold; it reads SEEEEGDLCR…ELCKEKLELN (71 aa). Cys-552, Cys-555, Cys-570, Cys-572, His-580, Cys-583, Cys-604, and Cys-607 together coordinate Zn(2+). Thr-686 is modified (phosphothreonine). A phosphoserine mark is found at Ser-687 and Ser-691.

It localises to the cytoplasm. It carries out the reaction S-ubiquitinyl-[E2 ubiquitin-conjugating enzyme]-L-cysteine + [acceptor protein]-L-lysine = [E2 ubiquitin-conjugating enzyme]-L-cysteine + N(6)-ubiquitinyl-[acceptor protein]-L-lysine.. Its pathway is protein modification; protein ubiquitination. E3 ubiquitin-protein ligase which may specifically enhance the E2 activity of HIP2. E3 ubiquitin ligases accept ubiquitin from an E2 ubiquitin-conjugating enzyme in the form of a thioester and then directly transfer the ubiquitin to targeted substrates. May be involved in T-cell proliferation by regulating LIF secretion. May play a role in lysosome homeostasis. Promotes 'Lys-6', 'Lys-11' and 'Lys-63'-linked mixed polyubiquitination on ATG14 leading to the inhibition of autophagy by impairing the interaction between ATG14 and STX7. Participates in the dopamine-mediated negative regulation of the NLRP3 inflammasome by promoting its uibiquitination and subsequent degradation. The chain is E3 ubiquitin-protein ligase MARCHF7 (MARCHF7) from Pongo abelii (Sumatran orangutan).